Reading from the N-terminus, the 491-residue chain is Cobyric acid synthase (491 aa).

Positions 249-439 (PIDIAVIKLP…IHGVFDGVEF (191 aa)) constitute a GATase cobBQ-type domain. The active-site Nucleophile is the C329. Residue H431 is part of the active site.

The protein belongs to the CobB/CobQ family. CobQ subfamily.

The protein operates within cofactor biosynthesis; adenosylcobalamin biosynthesis. Its function is as follows. Catalyzes amidations at positions B, D, E, and G on adenosylcobyrinic A,C-diamide. NH(2) groups are provided by glutamine, and one molecule of ATP is hydrogenolyzed for each amidation. The polypeptide is Cobyric acid synthase (Clostridium tetani (strain Massachusetts / E88)).